A 932-amino-acid chain; its full sequence is MPCLARLLDLADVSDSSSKANGSNPIGADRSAQLPAAWDPAAVEENLYQGWVDSGYFKADPSSDKPPFSIVLPPPNVTGQLHMGHALDHTLMDAMARRKRMQGFEVLWLPGSDHAGIATQTKVEANLKETEGKDRFDYGRDAFVGKVWEWKDRYGGVIQRQMRAIGDSVDWSRERFTLDDGLSRAVQTMFKELFDAGLIYRANRMVNWSPVLQTAISDIEVVYSDDEGELVSIRYGSLEDSEPHVVVATTRVETMLGDVAVAVHPEDERYTDLVGKSLPHPFLPDRQMIVVADDYVDPEFGTGAVKITPAHDPNDFAMGQRHDLPMPVIMDETGHIANTGTEFDGMERYEAREKIRLALEEQGRIVARKFPYVHSVGHSERSKEAVEPRLSEQWFVKVEELAKMSGDAIRSGDSVIHPSSQEPRWFDWVDDMHDWCISRQLWWGHRIPIWYGPNGEIVCCGPDDEAPTGEGWYQDEDVLDTWFSSALWPFSTMGWPEKTPELEKFYPTSVLVTGYDILFFWVARMMMFATFASKHTPEILGTGKDGRPQIPFNDIFLHGLVRDEHGRKMSKSLGNGIDPMDWVRDYGADALRFTLARGANPGSDLPVGEDAAQSSRNFATKLYNATKFALMNGARVGELPARETLTDADRWILDRLEEVRQLVDDALDRYEFSLANENLYRFAWGEFCDWYLEIAKVQIPRDWDSATEEQVQRGIRTQIVLGRVLDSVLRLLHPAMPFVTETLWKALTDGEEGYSESLVTADWPTADLTNGGAQTDADAVRRMADVDKLVTELRRFRSDQGVKPSQKVPAKLDFAAADLANFEEAVRSLVRLETPEEDFAETASIEVRLSQATIAVQLDTSGTVDVAAERKRLEKDLAAAQKELDNAAKKLGNENFLAKAPEKVVEGIRERQRVAQEEFERITARLEGLPKA.

The short motif at 75-85 (PNVTGQLHMGH) is the 'HIGH' region element. The 'KMSKS' region motif lies at 568–572 (KMSKS). An ATP-binding site is contributed by Lys-571. Residues 863–929 (TVDVAAERKR…ERITARLEGL (67 aa)) adopt a coiled-coil conformation.

Belongs to the class-I aminoacyl-tRNA synthetase family. ValS type 1 subfamily. Monomer.

The protein localises to the cytoplasm. It catalyses the reaction tRNA(Val) + L-valine + ATP = L-valyl-tRNA(Val) + AMP + diphosphate. Functionally, catalyzes the attachment of valine to tRNA(Val). As ValRS can inadvertently accommodate and process structurally similar amino acids such as threonine, to avoid such errors, it has a 'posttransfer' editing activity that hydrolyzes mischarged Thr-tRNA(Val) in a tRNA-dependent manner. The polypeptide is Valine--tRNA ligase (Corynebacterium jeikeium (strain K411)).